Consider the following 383-residue polypeptide: Probable disease resistance protein At4g19060 (383 aa).

The segment at 36–84 (YEKWSSGKQRGSSSKHGNQSTHGDSSPTRNSSGSSKKGRPKANRVETSS) is disordered. Residues 41–70 (SGKQRGSSSKHGNQSTHGDSSPTRNSSGSS) show a composition bias toward polar residues. 2 consecutive NB-ARC domains span residues 75–184 (PKAN…MFKH) and 207–281 (VKEK…LAKA). 121 to 128 (GKYGVGKT) lines the ATP pocket.

Its function is as follows. Possible disease resistance protein. The polypeptide is Probable disease resistance protein At4g19060 (Arabidopsis thaliana (Mouse-ear cress)).